The primary structure comprises 307 residues: E3 ubiquitin-protein ligase PHF7 (307 aa).

The C2HC pre-PHD-type zinc finger occupies 30–68; the sequence is SPVCLLCLQEPGDPEKLGEFLQKDNLCVHYFCLILSSRL. Positions 33, 36, 58, and 61 each coordinate Zn(2+). Residues 67-92 are required for interaction and ubiquitination of the nucleosome core particle; it reads RLPQKGQPNRGLHGFMPEDIKREAVR. A PHD-type zinc finger spans residues 96–145; sequence KICFVCKKKGAAIRCQNDQCVQNFHLPCGQERGCLSQFFGEYKSYCRKHR. The Zn(2+) site is built by Cys-98, Cys-101, Cys-110, Cys-115, His-120, Cys-123, Cys-141, His-144, Cys-160, Cys-163, Cys-179, Cys-180, His-186, Cys-189, Cys-204, Cys-207, Cys-248, Cys-253, Cys-273, Cys-276, His-282, Cys-285, Cys-297, and Cys-300. Residues 150 to 307 form a required for interaction with ubiquitinated UBE2D2 region; sequence IHQGSLGEES…NECLPASTTS (158 aa). An RING-type; degenerate zinc finger spans residues 160–208; it reads CVLCCENLSRTSVENIQSPCCSQAIYHRKCIQKYAHTSAKHFFKCPQCN. Residues 244–301 form a required for association with and ubiquitination of H3 region; it reads RYRHCDAPICLYEQGRDSFEDEGRWRLILCATCGSHGTHRDCSSLRPNSKKWECNECL.

As to quaternary structure, interacts with MEF2C; the interaction promotes MEF2C binding to its transcription targets. Interacts with GATA4; the interaction promotes GATA4 binding to its transcription targets. Interacts with UBE2D2; the interaction inhibits cleavage of PHF7 and promotes association of the complex with the nucleosome core particle. In terms of tissue distribution, expressed in Leydig cells and in developing spermatids (at protein level). Highly expressed in Sertoli cells in testis.

It is found in the nucleus. The catalysed reaction is S-ubiquitinyl-[E2 ubiquitin-conjugating enzyme]-L-cysteine + [acceptor protein]-L-lysine = [E2 ubiquitin-conjugating enzyme]-L-cysteine + N(6)-ubiquitinyl-[acceptor protein]-L-lysine.. It participates in protein modification; protein ubiquitination. E3 ubiquitin-protein ligase which ubiquitinates histone H3 at 'Lys-14'. Required for male fertility, via inhibition of SPOP-mediated BRDT degradation when in the presence of acetylated histone H4 in early condensing spermatids. Stabilization of BRDT allows it to facilitate histone removal in early condensing spermatids and promote the progression of histone-to-protamine exchange. Promotes the expression of steroidogenesis proteins in the testes, and as a result plays a role in maintaining testosterone levels and repressing osteoclastogenesis. Promotes transcription of cardiac enhancer genes by facilitating binding of cardiac transcription factors such as MEF2C and GATA4 to target gene promoters. Ubiquitinates histone H4. Ubiquitinates histone H2A and H3 as part of the nucleosome core particle. In Mus musculus (Mouse), this protein is E3 ubiquitin-protein ligase PHF7.